Consider the following 240-residue polypeptide: UDP-2,3-diacylglucosamine hydrolase (240 aa).

The Mn(2+) site is built by D8, H10, D41, N79, and H114. 79–80 provides a ligand contact to substrate; that stretch reads NR. The substrate site is built by D122, S160, T164, K167, and H195. 2 residues coordinate Mn(2+): H195 and H197.

Belongs to the LpxH family. Mn(2+) serves as cofactor.

The protein resides in the cell inner membrane. It carries out the reaction UDP-2-N,3-O-bis[(3R)-3-hydroxytetradecanoyl]-alpha-D-glucosamine + H2O = 2-N,3-O-bis[(3R)-3-hydroxytetradecanoyl]-alpha-D-glucosaminyl 1-phosphate + UMP + 2 H(+). The protein operates within glycolipid biosynthesis; lipid IV(A) biosynthesis; lipid IV(A) from (3R)-3-hydroxytetradecanoyl-[acyl-carrier-protein] and UDP-N-acetyl-alpha-D-glucosamine: step 4/6. Its function is as follows. Hydrolyzes the pyrophosphate bond of UDP-2,3-diacylglucosamine to yield 2,3-diacylglucosamine 1-phosphate (lipid X) and UMP by catalyzing the attack of water at the alpha-P atom. Involved in the biosynthesis of lipid A, a phosphorylated glycolipid that anchors the lipopolysaccharide to the outer membrane of the cell. The polypeptide is UDP-2,3-diacylglucosamine hydrolase (Pseudomonas paraeruginosa (strain DSM 24068 / PA7) (Pseudomonas aeruginosa (strain PA7))).